The sequence spans 120 residues: Glycine cleavage system H protein (120 aa).

The 83-residue stretch at 17-99 folds into the Lipoyl-binding domain; the sequence is VATVGITEHA…QGAAWFFKLK (83 aa). N6-lipoyllysine is present on K58.

This sequence belongs to the GcvH family. The glycine cleavage system is composed of four proteins: P, T, L and H. Requires (R)-lipoate as cofactor.

Functionally, the glycine cleavage system catalyzes the degradation of glycine. The H protein shuttles the methylamine group of glycine from the P protein to the T protein. The protein is Glycine cleavage system H protein of Sinorhizobium medicae (strain WSM419) (Ensifer medicae).